The primary structure comprises 31 residues: Glucagon-5 (31 aa).

It belongs to the glucagon family.

It is found in the secreted. Glucagon plays a key role in glucose metabolism and homeostasis. Regulates blood glucose by increasing gluconeogenesis and decreasing glycolysis. The sequence is that of Glucagon-5 from Huso dauricus (Kaluga sturgeon).